Reading from the N-terminus, the 193-residue chain is Major structural subunit of bundle-forming pilus (193 aa).

A propeptide spanning residues 1–13 is cleaved from the precursor; sequence MVSKIMNKKYEKG. Leu14 bears the N-methylleucine mark. Residues 14–35 form a helical membrane-spanning segment; it reads LSLIESAMVLALAATVTAGVMF. A disulfide bridge connects residues Cys129 and Cys179.

The protein belongs to the N-Me-Phe pilin family. In terms of assembly, 10 to 100 laterally aligned filaments or bundle-forming pili coalesce into rope-like bundles. These form linkages between the bacteria within the enteropathogenic E.coli (EPEC) microcolonies that are attached to epithelial cells.

The protein resides in the fimbrium. Its subcellular location is the membrane. Major repeating bundle-forming pilus (BFP) subunit. Is required for EPEC localized adherence. The polypeptide is Major structural subunit of bundle-forming pilus (bfpA) (Escherichia coli O111:H-).